A 154-amino-acid polypeptide reads, in one-letter code: Stigma-specific STIG1-like protein 3 (154 aa).

The signal sequence occupies residues 1–23; sequence MGHRNTVLTILLTISIAIMVLIA.

It belongs to the STIG1 family.

This chain is Stigma-specific STIG1-like protein 3, found in Arabidopsis thaliana (Mouse-ear cress).